Consider the following 546-residue polypeptide: DDB1- and CUL4-associated factor 11 (546 aa).

Low complexity predominate over residues M1–G19. The tract at residues M1–V40 is disordered. The residue at position 75 (S75) is a Phosphoserine. 7 WD repeats span residues S170–K210, D216–D258, E263–Q302, S305–P345, G353–G392, G435–T480, and N481–D520. Positions P523–Q546 are disordered. Polar residues predominate over residues R537–Q546.

Interacts with DDB1 and CUL4A.

Its pathway is protein modification; protein ubiquitination. In terms of biological role, may function as a substrate receptor for CUL4-DDB1 E3 ubiquitin-protein ligase complex. This is DDB1- and CUL4-associated factor 11 (DCAF11) from Pongo abelii (Sumatran orangutan).